Here is a 118-residue protein sequence, read N- to C-terminus: Hydrogenase maturation factor HypA (118 aa).

A Ni(2+)-binding site is contributed by histidine 2. 4 residues coordinate Zn(2+): cysteine 73, cysteine 76, cysteine 89, and cysteine 92.

Belongs to the HypA/HybF family.

Involved in the maturation of [NiFe] hydrogenases. Required for nickel insertion into the metal center of the hydrogenase. This is Hydrogenase maturation factor HypA from Shewanella oneidensis (strain ATCC 700550 / JCM 31522 / CIP 106686 / LMG 19005 / NCIMB 14063 / MR-1).